Reading from the N-terminus, the 379-residue chain is Gonadotropin-releasing hormone II receptor (379 aa).

Topologically, residues 1-45 (MSGNTTLLLSNPTNVLDNSSVLNVSVSPPVLKWETPTFTTAARFR) are extracellular. 3 N-linked (GlcNAc...) asparagine glycosylation sites follow: Asn4, Asn18, and Asn23. Residues 46–65 (VAATLVLFVFAAASNLSVLL) traverse the membrane as a helical segment. The Cytoplasmic segment spans residues 66–80 (SVTRGRGRRLASHLR). Residues 81–100 (PLIASLASADLVMTFVVMPL) traverse the membrane as a helical segment. At 101–118 (DAVWNVTVQWYAGDAMCK) the chain is on the extracellular side. Asn105 is a glycosylation site (N-linked (GlcNAc...) asparagine). Cys117 and Cys194 are joined by a disulfide. A helical transmembrane segment spans residues 119-140 (LMCFLKLFAMHSAAFILVVVSL). The Cytoplasmic portion of the chain corresponds to 141-167 (DRHHAILHPLDTLDAGRRNRRMLLTAW). The chain crosses the membrane as a helical span at residues 168–184 (ILSLLLASPQLFIFRAI). The Extracellular segment spans residues 185-210 (KAKGVDFVQCATHGSFQQHWQETAYN). A helical membrane pass occupies residues 211-230 (MFHFVTLYVFPLLVMSLCYT). At 231–283 (RILVEINRQMHRSKDKAGEPCLRRSGTDMIPKARMKTLKMTIIIVASFVICWT) the chain is on the cytoplasmic side. Residues 284–302 (PYYLLGIWYWFQPQMLHVI) traverse the membrane as a helical segment. At 303–308 (PDYVHH) the chain is on the extracellular side. A helical membrane pass occupies residues 309–328 (VFFVFGNLNTCCDPVIYGFF). Over 329 to 379 (TPSFRADLSRCFCWRNQNASAKSLPHFSGHRREVSGEAESDLGSGDQPSGQ) the chain is Cytoplasmic. The interval 355–379 (FSGHRREVSGEAESDLGSGDQPSGQ) is disordered.

The protein belongs to the G-protein coupled receptor 1 family. Phosphorylated on the C-terminal cytoplasmic tail.

The protein resides in the cell membrane. Its function is as follows. Receptor for gonadotropin releasing hormone II (GnRH II). This receptor mediates its action by association with G proteins that activate a phosphatidylinositol-calcium second messenger system. In Clarias gariepinus (North African catfish), this protein is Gonadotropin-releasing hormone II receptor.